We begin with the raw amino-acid sequence, 447 residues long: Histidine--tRNA ligase (447 aa).

Belongs to the class-II aminoacyl-tRNA synthetase family. As to quaternary structure, homodimer.

It localises to the cytoplasm. It carries out the reaction tRNA(His) + L-histidine + ATP = L-histidyl-tRNA(His) + AMP + diphosphate + H(+). The polypeptide is Histidine--tRNA ligase (hisS) (Synechocystis sp. (strain ATCC 27184 / PCC 6803 / Kazusa)).